A 502-amino-acid polypeptide reads, in one-letter code: NAD(P)H-quinone oxidoreductase chain 4, chloroplastic (502 aa).

The next 14 membrane-spanning stretches (helical) occupy residues Phe4–Leu24, Ile37–Leu57, Leu87–Val107, Leu113–Ser130, Leu134–Met154, Phe167–Leu187, Ile213–His233, His244–Ile264, Ala274–Ala294, Met315–Leu335, Gln336–Asp356, Leu388–Thr408, Leu419–Leu439, and Leu464–Val484.

It belongs to the complex I subunit 4 family.

It is found in the plastid. Its subcellular location is the chloroplast thylakoid membrane. It catalyses the reaction a plastoquinone + NADH + (n+1) H(+)(in) = a plastoquinol + NAD(+) + n H(+)(out). The catalysed reaction is a plastoquinone + NADPH + (n+1) H(+)(in) = a plastoquinol + NADP(+) + n H(+)(out). This is NAD(P)H-quinone oxidoreductase chain 4, chloroplastic from Lolium perenne (Perennial ryegrass).